A 398-amino-acid polypeptide reads, in one-letter code: Putative molybdopterin biosynthesis protein MJ0666 (398 aa).

This sequence belongs to the MoeA family.

Its pathway is cofactor biosynthesis; molybdopterin biosynthesis. This is Putative molybdopterin biosynthesis protein MJ0666 from Methanocaldococcus jannaschii (strain ATCC 43067 / DSM 2661 / JAL-1 / JCM 10045 / NBRC 100440) (Methanococcus jannaschii).